We begin with the raw amino-acid sequence, 624 residues long: Plastin-2 (624 aa).

EF-hand domains lie at 9–44 and 49–84; these read EEME…ANLP and RVRE…LKSS. Residues Asp-22, Asp-24, Asn-26, His-28, Glu-33, Asp-62, Asn-64, Asp-66, Lys-68, and Glu-73 each contribute to the Ca(2+) site. 4 consecutive Calponin-homology (CH) domains span residues 118–234, 262–373, 392–501, and 513–621; these read EEEK…KIGL, LSPE…NKYP, TREE…RRYT, and KIID…ARGM. Actin-binding stretches follow at residues 118–373 and 392–621; these read EEEK…NKYP and TREE…ARGM.

In terms of assembly, monomer. Expressed by macrophages (at protein level).

It is found in the cytoplasm. The protein localises to the cytoskeleton. The protein resides in the cell junction. It localises to the cell projection. Its subcellular location is the ruffle membrane. Its function is as follows. Actin-binding protein. Plays a role in the activation of T-cells. The polypeptide is Plastin-2 (Danio rerio (Zebrafish)).